Consider the following 96-residue polypeptide: Large ribosomal subunit protein eL14 (96 aa).

This sequence belongs to the eukaryotic ribosomal protein eL14 family.

The protein is Large ribosomal subunit protein eL14 of Saccharolobus solfataricus (strain ATCC 35092 / DSM 1617 / JCM 11322 / P2) (Sulfolobus solfataricus).